An 89-amino-acid chain; its full sequence is LYR motif-containing protein 4 (89 aa).

It belongs to the complex I LYR family.

The protein localises to the mitochondrion. It localises to the nucleus. Its pathway is cofactor biosynthesis; iron-sulfur cluster biosynthesis. In terms of biological role, required for nuclear and mitochondrial iron-sulfur protein biosynthesis. This is LYR motif-containing protein 4 (lyrm4) from Xenopus laevis (African clawed frog).